We begin with the raw amino-acid sequence, 130 residues long: Small ribosomal subunit protein uS9 (130 aa).

It belongs to the universal ribosomal protein uS9 family.

The chain is Small ribosomal subunit protein uS9 from Bacillus velezensis (strain DSM 23117 / BGSC 10A6 / LMG 26770 / FZB42) (Bacillus amyloliquefaciens subsp. plantarum).